The primary structure comprises 324 residues: Clavaminate synthase 1 (324 aa).

3 residues coordinate Fe cation: His-144, Glu-146, and His-279. 2-oxoglutarate is bound at residue Arg-293.

It belongs to the clavaminate synthase family. Fe(2+) serves as cofactor.

It carries out the reaction deoxyamidinoproclavaminate + 2-oxoglutarate + O2 = amidinoproclavaminate + succinate + CO2. It catalyses the reaction proclavaminate + 2-oxoglutarate + O2 = dihydroclavaminate + succinate + CO2 + H2O. The enzyme catalyses dihydroclavaminate + 2-oxoglutarate + O2 = clavaminate + succinate + CO2 + H2O. The protein operates within antibiotic biosynthesis; clavulanate biosynthesis; clavulanate from D-glyceraldehyde 3-phosphate and L-arginine: step 3/8. It functions in the pathway antibiotic biosynthesis; clavulanate biosynthesis; clavulanate from D-glyceraldehyde 3-phosphate and L-arginine: step 5/8. Its pathway is antibiotic biosynthesis; clavulanate biosynthesis; clavulanate from D-glyceraldehyde 3-phosphate and L-arginine: step 6/8. The protein is Clavaminate synthase 1 (cs1) of Streptomyces clavuligerus.